Reading from the N-terminus, the 210-residue chain is Small ribosomal subunit protein eS8y (210 aa).

Residues 1-22 (MGISRDSIHKRRATGGKQKMWR) are disordered. Over residues 8–22 (IHKRRATGGKQKMWR) the composition is skewed to basic residues.

This sequence belongs to the eukaryotic ribosomal protein eS8 family.

This is Small ribosomal subunit protein eS8y (RPS8B) from Arabidopsis thaliana (Mouse-ear cress).